The sequence spans 209 residues: Uracil phosphoribosyltransferase (209 aa).

5-phospho-alpha-D-ribose 1-diphosphate contacts are provided by residues arginine 79, arginine 104, and 131 to 139 (DPMLATGGS). Residues isoleucine 194 and 199–201 (GDA) contribute to the uracil site. Aspartate 200 serves as a coordination point for 5-phospho-alpha-D-ribose 1-diphosphate.

This sequence belongs to the UPRTase family. It depends on Mg(2+) as a cofactor.

The catalysed reaction is UMP + diphosphate = 5-phospho-alpha-D-ribose 1-diphosphate + uracil. Its pathway is pyrimidine metabolism; UMP biosynthesis via salvage pathway; UMP from uracil: step 1/1. Its activity is regulated as follows. Allosterically activated by GTP. Functionally, catalyzes the conversion of uracil and 5-phospho-alpha-D-ribose 1-diphosphate (PRPP) to UMP and diphosphate. In Clostridium perfringens (strain ATCC 13124 / DSM 756 / JCM 1290 / NCIMB 6125 / NCTC 8237 / Type A), this protein is Uracil phosphoribosyltransferase.